A 66-amino-acid chain; its full sequence is MAKGGDVRVKITLECTSCTRDSVDKKYPGVSRYITQKNRRNTPIRSELKKFCPYCYKHTIHGEIKK.

This sequence belongs to the bacterial ribosomal protein bL33 family.

The protein localises to the plastid. The protein resides in the chloroplast. This Cycas taitungensis (Prince sago) protein is Large ribosomal subunit protein bL33c.